The following is a 464-amino-acid chain: MSTDKTNQSWGGRFSEPVDAFVARFTASVTFDQRLYRHDIMGSIAHATMLAKVGVLTDAERDSIIDGLKTIQGEIEAGSFDWRVDLEDVHMNIEARLTDRIGITGKKLHTGRSRNDQVATDIRLWLRDEIDLILGEITRLQKGLLELAEREAESIMPGFTHLQTAQPVTFGHHMLAWFEMLSRDYERLVDCRKRTNRMPLGSAALAGTTYPIDRELTCQLLGFEAVGGNSLDSVSDRDFAIEFCAAASVAMMHLSRFSEELVLWTSAQFQFIDLPDRFCTGSSIMPQKKNPDVPELVRGKSGRVFGALMGLLTLMKGQPLAYNKDNQEDKEPLFDAADTLRDSLRAFADMIPAIKPKHAIMREAALRGFSTATDLADYLVRRGLPFRDCHEIVGHAVKYGVETGKDLAEMSLEELRKFSDQIEQDVFAVLTLEGSVNARNHIGGTAPAQVRAAVARGQALLASR.

This sequence belongs to the lyase 1 family. Argininosuccinate lyase subfamily.

It is found in the cytoplasm. The enzyme catalyses 2-(N(omega)-L-arginino)succinate = fumarate + L-arginine. The protein operates within amino-acid biosynthesis; L-arginine biosynthesis; L-arginine from L-ornithine and carbamoyl phosphate: step 3/3. This chain is Argininosuccinate lyase, found in Pseudomonas fluorescens (strain ATCC BAA-477 / NRRL B-23932 / Pf-5).